The following is a 523-amino-acid chain: Putative pentatricopeptide repeat-containing protein At3g15200 (523 aa).

10 PPR repeats span residues 142–172 (SSML…MSKR), 177–211 (NEKT…GIDD), 212–242 (DLVA…RRRE), 246–280 (DIKA…KCRP), 281–315 (DVVS…RRNP), 316–350 (DVKI…GPDP), 351–385 (NVVT…GGSC), 388–418 (NDVT…NKCE), 420–454 (TSDL…GLGP), and 455–489 (DQRT…GMVP). The segment at 497 to 523 (LNQNKTKPRVEDKMLRSNLTSEESESD) is disordered.

It belongs to the PPR family. P subfamily.

In Arabidopsis thaliana (Mouse-ear cress), this protein is Putative pentatricopeptide repeat-containing protein At3g15200.